The following is a 318-amino-acid chain: Tyrosine--tRNA ligase (318 aa).

L-tyrosine is bound at residue tyrosine 35. The 'HIGH' region signature appears at 40-48 (PSGKVHLGH). L-tyrosine-binding residues include tyrosine 154, glutamine 158, aspartate 161, and glutamine 176. The 'KMSKS' region motif lies at 211–215 (KMSSS). Serine 214 serves as a coordination point for ATP.

Belongs to the class-I aminoacyl-tRNA synthetase family. TyrS type 3 subfamily. In terms of assembly, homodimer.

The protein resides in the cytoplasm. The catalysed reaction is tRNA(Tyr) + L-tyrosine + ATP = L-tyrosyl-tRNA(Tyr) + AMP + diphosphate + H(+). Catalyzes the attachment of tyrosine to tRNA(Tyr) in a two-step reaction: tyrosine is first activated by ATP to form Tyr-AMP and then transferred to the acceptor end of tRNA(Tyr). The polypeptide is Tyrosine--tRNA ligase (Methanosphaera stadtmanae (strain ATCC 43021 / DSM 3091 / JCM 11832 / MCB-3)).